The primary structure comprises 422 residues: Tk-subtilisin (422 aa).

The N-terminal stretch at 1-24 is a signal peptide; the sequence is MKKSIALVLSIVLLAALFAVPASA. The propeptide occupies 25–106; the sequence is GEQNTIRVIV…SWLGGGSTQP (82 aa). A Peptidase S8 domain is found at 111 to 417; it reads PWGIERVKAP…YGVVRAALAV (307 aa). Active-site charge relay system residues include Asp-139, His-177, and Ser-348.

It belongs to the peptidase S8 family. As to quaternary structure, monomer. Ca(2+) serves as cofactor.

Its subcellular location is the secreted. In terms of biological role, has a broad substrate specificity with a slight preference to large hydrophobic amino acid residues at the P1 position. The sequence is that of Tk-subtilisin from Thermococcus kodakarensis (strain ATCC BAA-918 / JCM 12380 / KOD1) (Pyrococcus kodakaraensis (strain KOD1)).